The following is a 575-amino-acid chain: MSRLDRSRYASLYGPTVGDRIRLADTDLFIEVTEDRSRGPGLAGSGDEAVFGGGKVIRESMGQSRATRAQGAPDLVITGAVVLDHWGVIKADVGIRDGRIVALGKAGNPDTMDGVHPDLVIGPGTEIIAGNGKILTAGAVDCHVHLICPQQVPEALGAGITTLIGGGTGPAEGTKATTVTPGSWNLARMLSAMDDWPVNIVLLGKGNTVNDESMWEQLRAGAAGFKLHEDWGTTPAAIDACLRVADAAGVQVALHSDTLNEAGFVEDTLAAIAGRAIHAYHTEGAGGGHAPDIITVAAAANVLPSSTNPTRPHTVNTLDEHLDMLMVCHHLNPSVPEDLAFAESRIRPSTIAAEDILHDLGAISMIGSDSQAMGRIGEVVLRTWQTAHVMKRRRGALPGDGPADNARARRYVAKYTICPAVAHGLDAQIGSVEPGKLADLVVYDPAFFGVRPSLVLKGGFVAWAAMGDANASIPTPQPVLPRPMWGAARGPAAASSLTFVSPAAISDGLPERLGLATPVVPVEDVRRRGKADLPENTATPDIRVDPDTFTVSIDGEAVEADPVRELPMAQRYFLF.

One can recognise a Urease domain in the interval 138 to 575 (GAVDCHVHLI…LPMAQRYFLF (438 aa)). Ni(2+) contacts are provided by His143, His145, and Lys226. N6-carboxylysine is present on Lys226. His228 is a substrate binding site. Ni(2+)-binding residues include His255 and His281. His329 functions as the Proton donor in the catalytic mechanism. Asp369 lines the Ni(2+) pocket.

It belongs to the metallo-dependent hydrolases superfamily. Urease alpha subunit family. In terms of assembly, heterotrimer of UreA (gamma), UreB (beta) and UreC (alpha) subunits. Three heterotrimers associate to form the active enzyme. Ni cation is required as a cofactor. Post-translationally, carboxylation allows a single lysine to coordinate two nickel ions.

Its subcellular location is the cytoplasm. It carries out the reaction urea + 2 H2O + H(+) = hydrogencarbonate + 2 NH4(+). The protein operates within nitrogen metabolism; urea degradation; CO(2) and NH(3) from urea (urease route): step 1/1. This chain is Urease subunit alpha, found in Frankia alni (strain DSM 45986 / CECT 9034 / ACN14a).